The primary structure comprises 284 residues: Diaminopimelate epimerase (284 aa).

Substrate is bound by residues Asn20, Gln53, and Asn73. The Proton donor role is filled by Cys82. Substrate is bound by residues 83–84 (GN), Asn167, Asn200, and 218–219 (ER). The active-site Proton acceptor is Cys227. 228 to 229 (GS) provides a ligand contact to substrate.

The protein belongs to the diaminopimelate epimerase family. As to quaternary structure, homodimer.

The protein resides in the cytoplasm. It carries out the reaction (2S,6S)-2,6-diaminopimelate = meso-2,6-diaminopimelate. The protein operates within amino-acid biosynthesis; L-lysine biosynthesis via DAP pathway; DL-2,6-diaminopimelate from LL-2,6-diaminopimelate: step 1/1. In terms of biological role, catalyzes the stereoinversion of LL-2,6-diaminopimelate (L,L-DAP) to meso-diaminopimelate (meso-DAP), a precursor of L-lysine and an essential component of the bacterial peptidoglycan. The chain is Diaminopimelate epimerase from Xanthomonas campestris pv. campestris (strain ATCC 33913 / DSM 3586 / NCPPB 528 / LMG 568 / P 25).